A 140-amino-acid chain; its full sequence is Arsenate reductase ArsI2 (140 aa).

C10 acts as the Nucleophile; cysteine thioarsenate intermediate in catalysis.

Belongs to the ArsC family.

It carries out the reaction [glutaredoxin]-dithiol + arsenate + glutathione + H(+) = glutathionyl-S-S-[glutaredoxin] + arsenite + H2O. Functionally, catalyzes the reduction of arsenate [As(V)] to arsenite [As(III)]. Does not constitute the major arsenate reductase in cells: essential only in the absence of ArsC (AC P74313). The polypeptide is Arsenate reductase ArsI2 (Synechocystis sp. (strain ATCC 27184 / PCC 6803 / Kazusa)).